The chain runs to 1399 residues: DNA-directed RNA polymerase subunit beta' (1399 aa).

Residues Cys-71, Cys-73, Cys-86, and Cys-89 each coordinate Zn(2+). Residues Asp-462, Asp-464, and Asp-466 each contribute to the Mg(2+) site. Residues Cys-810, Cys-884, Cys-891, and Cys-894 each contribute to the Zn(2+) site.

It belongs to the RNA polymerase beta' chain family. The RNAP catalytic core consists of 2 alpha, 1 beta, 1 beta' and 1 omega subunit. When a sigma factor is associated with the core the holoenzyme is formed, which can initiate transcription. Requires Mg(2+) as cofactor. The cofactor is Zn(2+).

The catalysed reaction is RNA(n) + a ribonucleoside 5'-triphosphate = RNA(n+1) + diphosphate. Functionally, DNA-dependent RNA polymerase catalyzes the transcription of DNA into RNA using the four ribonucleoside triphosphates as substrates. This Nitrobacter winogradskyi (strain ATCC 25391 / DSM 10237 / CIP 104748 / NCIMB 11846 / Nb-255) protein is DNA-directed RNA polymerase subunit beta'.